The chain runs to 174 residues: Centrosomal protein 20 (174 aa).

Residues 1 to 104 (MATVAELKAV…AFEESKDNTI (104 aa)) form a necessary and sufficient for homooligomerization and localization to centrosomes and pericentriolar satellites region. Positions 49–81 (ENLLINELIREYLEFNKYKYTASVLIAESGQPV) constitute a LisH domain. The interval 129-174 (GPSLQPSDPSLGRQPSRRKPMDDHLRKEEQKSTNIEDLHVSQAVNR) is disordered. Ser-144 carries the post-translational modification Phosphoserine. The span at 147 to 167 (KPMDDHLRKEEQKSTNIEDLH) shows a compositional bias: basic and acidic residues.

Belongs to the CEP43 family. As to quaternary structure, homooligomer; probably required for localization to centrosomes. Forms a complex with KIAA0753/OFIP and OFD1; within this complex may stabilize the interaction between OFD1 and KIAA0753/OFIP. Interacts with PCM1; this interaction may be mediated by KIAA0753/OFIP. Interacts with PLK1 in later G1, S, G2 and M phases of the cell cycle; this interaction recruits PLK1 to centrosomes. Widely expressed. Detected in brain, heart, kidney, liver, lung, skeletal muscle, placenta and intestine.

It localises to the cytoplasm. The protein localises to the cytoskeleton. The protein resides in the microtubule organizing center. Its subcellular location is the centrosome. It is found in the centriole. It localises to the cell projection. The protein localises to the cilium. The protein resides in the cilium basal body. Its subcellular location is the cytoplasmic granule. It is found in the centriolar satellite. Its function is as follows. Involved in the biogenesis of cilia. Required for the recruitment of PLK1 to centrosomes and S phase progression. This Homo sapiens (Human) protein is Centrosomal protein 20.